We begin with the raw amino-acid sequence, 303 residues long: Elongation factor Ts (303 aa).

Residues 79–82 (TDFV) form an involved in Mg(2+) ion dislocation from EF-Tu region.

Belongs to the EF-Ts family.

The protein localises to the cytoplasm. Functionally, associates with the EF-Tu.GDP complex and induces the exchange of GDP to GTP. It remains bound to the aminoacyl-tRNA.EF-Tu.GTP complex up to the GTP hydrolysis stage on the ribosome. In Syntrophotalea carbinolica (strain DSM 2380 / NBRC 103641 / GraBd1) (Pelobacter carbinolicus), this protein is Elongation factor Ts.